Consider the following 378-residue polypeptide: Anhydro-N-acetylmuramic acid kinase (378 aa).

Residue 23 to 30 (GTSMDGAD) coordinates ATP.

Belongs to the anhydro-N-acetylmuramic acid kinase family.

The enzyme catalyses 1,6-anhydro-N-acetyl-beta-muramate + ATP + H2O = N-acetyl-D-muramate 6-phosphate + ADP + H(+). Its pathway is amino-sugar metabolism; 1,6-anhydro-N-acetylmuramate degradation. It functions in the pathway cell wall biogenesis; peptidoglycan recycling. Functionally, catalyzes the specific phosphorylation of 1,6-anhydro-N-acetylmuramic acid (anhMurNAc) with the simultaneous cleavage of the 1,6-anhydro ring, generating MurNAc-6-P. Is required for the utilization of anhMurNAc either imported from the medium or derived from its own cell wall murein, and thus plays a role in cell wall recycling. This chain is Anhydro-N-acetylmuramic acid kinase, found in Bordetella pertussis (strain Tohama I / ATCC BAA-589 / NCTC 13251).